Here is a 66-residue protein sequence, read N- to C-terminus: DNA-directed RNA polymerase subunit Rpo10 (66 aa).

Zn(2+)-binding residues include Cys-7, Cys-10, Cys-44, and Cys-45.

The protein belongs to the archaeal Rpo10/eukaryotic RPB10 RNA polymerase subunit family. As to quaternary structure, part of the RNA polymerase complex. Zn(2+) is required as a cofactor.

It is found in the cytoplasm. The enzyme catalyses RNA(n) + a ribonucleoside 5'-triphosphate = RNA(n+1) + diphosphate. DNA-dependent RNA polymerase (RNAP) catalyzes the transcription of DNA into RNA using the four ribonucleoside triphosphates as substrates. The chain is DNA-directed RNA polymerase subunit Rpo10 from Saccharolobus islandicus (strain Y.N.15.51 / Yellowstone #2) (Sulfolobus islandicus).